A 193-amino-acid chain; its full sequence is Ion-translocating oxidoreductase complex subunit A (193 aa).

The next 6 helical transmembrane spans lie at 5–25 (LLLF…FLGL), 47–67 (FVMT…LIPL), 72–92 (LRTL…EMVV), 102–122 (LLGI…VALL), 134–154 (ALYG…FAAI), and 171–191 (AIAL…SGLV).

It belongs to the NqrDE/RnfAE family. In terms of assembly, the complex is composed of six subunits: RsxA, RsxB, RsxC, RsxD, RsxE and RsxG.

Its subcellular location is the cell inner membrane. Part of a membrane-bound complex that couples electron transfer with translocation of ions across the membrane. Required to maintain the reduced state of SoxR. In Salmonella arizonae (strain ATCC BAA-731 / CDC346-86 / RSK2980), this protein is Ion-translocating oxidoreductase complex subunit A.